We begin with the raw amino-acid sequence, 314 residues long: Ribose-phosphate pyrophosphokinase (314 aa).

ATP is bound by residues 37 to 39 and 96 to 97; these read DGE and RQ. Mg(2+) is bound by residues histidine 131 and aspartate 170. The active site involves lysine 194. D-ribose 5-phosphate is bound by residues arginine 196, aspartate 220, and 224–228; that span reads DTGGT.

It belongs to the ribose-phosphate pyrophosphokinase family. Class I subfamily. As to quaternary structure, homohexamer. Mg(2+) serves as cofactor.

The protein localises to the cytoplasm. It carries out the reaction D-ribose 5-phosphate + ATP = 5-phospho-alpha-D-ribose 1-diphosphate + AMP + H(+). The protein operates within metabolic intermediate biosynthesis; 5-phospho-alpha-D-ribose 1-diphosphate biosynthesis; 5-phospho-alpha-D-ribose 1-diphosphate from D-ribose 5-phosphate (route I): step 1/1. Its function is as follows. Involved in the biosynthesis of the central metabolite phospho-alpha-D-ribosyl-1-pyrophosphate (PRPP) via the transfer of pyrophosphoryl group from ATP to 1-hydroxyl of ribose-5-phosphate (Rib-5-P). The chain is Ribose-phosphate pyrophosphokinase from Vibrio parahaemolyticus serotype O3:K6 (strain RIMD 2210633).